A 360-amino-acid polypeptide reads, in one-letter code: Probable dual-specificity RNA methyltransferase RlmN (360 aa).

E91 (proton acceptor) is an active-site residue. One can recognise a Radical SAM core domain in the interval 97-335 (QHYGQSVCVT…CVVRQEHGTD (239 aa)). C104 and C340 are oxidised to a cystine. Positions 111, 115, and 118 each coordinate [4Fe-4S] cluster. S-adenosyl-L-methionine-binding positions include 163 to 164 (GE), S195, 218 to 220 (SLH), and N296. Catalysis depends on C340, which acts as the S-methylcysteine intermediate.

Belongs to the radical SAM superfamily. RlmN family. It depends on [4Fe-4S] cluster as a cofactor.

The protein resides in the cytoplasm. It catalyses the reaction adenosine(2503) in 23S rRNA + 2 reduced [2Fe-2S]-[ferredoxin] + 2 S-adenosyl-L-methionine = 2-methyladenosine(2503) in 23S rRNA + 5'-deoxyadenosine + L-methionine + 2 oxidized [2Fe-2S]-[ferredoxin] + S-adenosyl-L-homocysteine. The catalysed reaction is adenosine(37) in tRNA + 2 reduced [2Fe-2S]-[ferredoxin] + 2 S-adenosyl-L-methionine = 2-methyladenosine(37) in tRNA + 5'-deoxyadenosine + L-methionine + 2 oxidized [2Fe-2S]-[ferredoxin] + S-adenosyl-L-homocysteine. Functionally, specifically methylates position 2 of adenine 2503 in 23S rRNA and position 2 of adenine 37 in tRNAs. The polypeptide is Probable dual-specificity RNA methyltransferase RlmN (Streptococcus equi subsp. equi (strain 4047)).